Here is a 122-residue protein sequence, read N- to C-terminus: Protein translocase subunit SecE (122 aa).

Transmembrane regions (helical) follow at residues 14–34 (LLKW…NQYF), 38–58 (PILY…FLAL), and 93–113 (LIVV…DSLL).

It belongs to the SecE/SEC61-gamma family. Component of the Sec protein translocase complex. Heterotrimer consisting of SecY, SecE and SecG subunits. The heterotrimers can form oligomers, although 1 heterotrimer is thought to be able to translocate proteins. Interacts with the ribosome. Interacts with SecDF, and other proteins may be involved. Interacts with SecA.

Its subcellular location is the cell inner membrane. Essential subunit of the Sec protein translocation channel SecYEG. Clamps together the 2 halves of SecY. May contact the channel plug during translocation. This chain is Protein translocase subunit SecE, found in Pseudomonas aeruginosa (strain ATCC 15692 / DSM 22644 / CIP 104116 / JCM 14847 / LMG 12228 / 1C / PRS 101 / PAO1).